The chain runs to 154 residues: Peptide deformylase (154 aa).

Fe cation-binding residues include C90 and H132. E133 is an active-site residue. Residue H136 participates in Fe cation binding.

This sequence belongs to the polypeptide deformylase family. It depends on Fe(2+) as a cofactor.

The catalysed reaction is N-terminal N-formyl-L-methionyl-[peptide] + H2O = N-terminal L-methionyl-[peptide] + formate. In terms of biological role, removes the formyl group from the N-terminal Met of newly synthesized proteins. Requires at least a dipeptide for an efficient rate of reaction. N-terminal L-methionine is a prerequisite for activity but the enzyme has broad specificity at other positions. The sequence is that of Peptide deformylase from Desulforudis audaxviator (strain MP104C).